Consider the following 144-residue polypeptide: Bacilliredoxin BrxA (144 aa).

Active-site nucleophile residues include C53 and C55. S-bacillithiol cysteine disulfide is present on C53. Residues C53 to C55 carry the CXC active site motif motif. C53 and C55 are disulfide-bonded.

This sequence belongs to the bacilliredoxin family. In terms of processing, N-terminal Cys of the CXC active site motif can react with bacillithiol (BSH) to form mixed disulfides. S-bacillithiolation protects Cys residues against overoxidation by acting as a redox switch in response to oxidative stress.

Functionally, S-bacillithiolation is the formation of mixed disulfide bonds between protein thiols and the general thiol reductant bacillithiol (BSH) under oxidative stress. BSH is an equivalent of glutathione (GSH) in Firmicutes. This protein is a dithiol bacilliredoxin, which debacillithiolates (removes BSH) the S-bacillithiolated OhrR (OhrR-SSB) in vitro and in vivo NaOCl-generated S-bacillithiolated MetE (MetE-SSB). Involved in maintaining redox homeostasis in response to disulfide stress conditions. Has a redox potential of -130 mV. Displays weak protein disulfide isomerase activity in vitro. The sequence is that of Bacilliredoxin BrxA from Bacillus subtilis (strain 168).